We begin with the raw amino-acid sequence, 545 residues long: La-related protein 6B (545 aa).

The span at 1 to 10 (MADQQTLDSS) shows a compositional bias: polar residues. Disordered stretches follow at residues 1–76 (MADQ…IPPP), 105–187 (LVPV…DSKT), and 382–545 (HQTK…VQAE). Positions 23 to 49 (SHSTSSTTSASSSSDPSLLRSLSLSRL) are enriched in low complexity. Residues 61-76 (TTPPLPQPPRMIIPPP) show a composition bias toward pro residues. A compositionally biased stretch (basic residues) spans 111–126 (HHPHHRFHQHHHHNRH). Residues 154 to 173 (LVSKKNDRRDHSKRESKNDQ) are compositionally biased toward basic and acidic residues. A compositionally biased stretch (polar residues) spans 174-185 (VTETGASVSIDS). Positions 187–278 (TGLPEDSIQK…RRISPITESA (92 aa)) constitute an HTH La-type RNA-binding domain. The RRM domain maps to 285 to 383 (RIIVAENLPE…LKVRLMLKHQ (99 aa)). The span at 448 to 464 (GQRKGRNRGRGKGRGRG) shows a compositional bias: basic residues. The segment covering 465-478 (QPHQNQNQNNNHSH) has biased composition (low complexity). Positions 479 to 497 (NQNHNHNGRGNHHHHHHHQ) are enriched in basic residues. A compositionally biased stretch (polar residues) spans 498–509 (VGTQPSNNPMNN). Low complexity predominate over residues 510–519 (MEQPGMGKQQ).

The protein localises to the nucleus. Its function is as follows. Transcriptional regulator. This is La-related protein 6B (LARP6B) from Arabidopsis thaliana (Mouse-ear cress).